The sequence spans 323 residues: tRNA-dihydrouridine(20/20a) synthase (323 aa).

FMN-binding positions include 14-16 (PML) and Gln66. Cys96 acts as the Proton donor in catalysis. Residues Lys135, His166, 206 to 208 (NGG), and 228 to 229 (GR) contribute to the FMN site.

This sequence belongs to the Dus family. DusA subfamily. FMN serves as cofactor.

It carries out the reaction 5,6-dihydrouridine(20) in tRNA + NADP(+) = uridine(20) in tRNA + NADPH + H(+). It catalyses the reaction 5,6-dihydrouridine(20) in tRNA + NAD(+) = uridine(20) in tRNA + NADH + H(+). The enzyme catalyses 5,6-dihydrouridine(20a) in tRNA + NADP(+) = uridine(20a) in tRNA + NADPH + H(+). The catalysed reaction is 5,6-dihydrouridine(20a) in tRNA + NAD(+) = uridine(20a) in tRNA + NADH + H(+). Catalyzes the synthesis of 5,6-dihydrouridine (D), a modified base found in the D-loop of most tRNAs, via the reduction of the C5-C6 double bond in target uridines. Specifically modifies U20 and U20a in tRNAs. This is tRNA-dihydrouridine(20/20a) synthase from Haemophilus ducreyi (strain 35000HP / ATCC 700724).